The sequence spans 168 residues: Ribosome maturation factor RimM (168 aa).

Residues 96-168 (KDEYYWGDLV…RIRVAWQKDW (73 aa)) enclose the PRC barrel domain.

The protein belongs to the RimM family. As to quaternary structure, binds ribosomal protein uS19.

Its subcellular location is the cytoplasm. Its function is as follows. An accessory protein needed during the final step in the assembly of 30S ribosomal subunit, possibly for assembly of the head region. Essential for efficient processing of 16S rRNA. May be needed both before and after RbfA during the maturation of 16S rRNA. It has affinity for free ribosomal 30S subunits but not for 70S ribosomes. The protein is Ribosome maturation factor RimM of Azoarcus sp. (strain BH72).